A 98-amino-acid chain; its full sequence is Integration host factor subunit beta (98 aa).

It belongs to the bacterial histone-like protein family. As to quaternary structure, heterodimer of an alpha and a beta chain.

Its function is as follows. This protein is one of the two subunits of integration host factor, a specific DNA-binding protein that functions in genetic recombination as well as in transcriptional and translational control. The sequence is that of Integration host factor subunit beta from Pseudomonas fluorescens (strain SBW25).